Reading from the N-terminus, the 174-residue chain is Mediator of RNA polymerase II transcription subunit 30 (174 aa).

The stretch at 113–166 forms a coiled coil; that stretch reads VEDDSSKLEDRMANQLRAASEERREVLEVNKKLKQKNQQLKMIMDQLRNLIWEI.

It belongs to the Mediator complex subunit 30 family. As to quaternary structure, component of the Mediator complex.

It is found in the nucleus. Component of the Mediator complex, a coactivator involved in the regulated transcription of nearly all RNA polymerase II-dependent genes. Mediator functions as a bridge to convey information from gene-specific regulatory proteins to the basal RNA polymerase II transcription machinery. Mediator is recruited to promoters by direct interactions with regulatory proteins and serves as a scaffold for the assembly of a functional preinitiation complex with RNA polymerase II and the general transcription factors. In Danio rerio (Zebrafish), this protein is Mediator of RNA polymerase II transcription subunit 30 (med30).